Consider the following 163-residue polypeptide: Interleukin-31 (163 aa).

The N-terminal stretch at 1 to 23 is a signal peptide; it reads MIFHTGTTKPTLVLLCCIGTWLA. Residues Asn-55, Asn-84, and Asn-124 are each glycosylated (N-linked (GlcNAc...) asparagine).

It localises to the secreted. In terms of biological role, activates STAT3 and possibly STAT1 and STAT5 through the IL31 heterodimeric receptor composed of IL31RA and OSMR. May function in skin immunity. Enhances myeloid progenitor cell survival in vitro. Induces RETNLA and serum amyloid A protein expression in macrophages. This Mus musculus (Mouse) protein is Interleukin-31 (Il31).